The following is a 729-amino-acid chain: 1,4-alpha-glucan branching enzyme GlgB (729 aa).

Asp408 (nucleophile) is an active-site residue. The active-site Proton donor is the Glu461.

Belongs to the glycosyl hydrolase 13 family. GlgB subfamily. Monomer.

It carries out the reaction Transfers a segment of a (1-&gt;4)-alpha-D-glucan chain to a primary hydroxy group in a similar glucan chain.. The protein operates within glycan biosynthesis; glycogen biosynthesis. Its function is as follows. Catalyzes the formation of the alpha-1,6-glucosidic linkages in glycogen by scission of a 1,4-alpha-linked oligosaccharide from growing alpha-1,4-glucan chains and the subsequent attachment of the oligosaccharide to the alpha-1,6 position. This Vibrio cholerae serotype O1 (strain ATCC 39315 / El Tor Inaba N16961) protein is 1,4-alpha-glucan branching enzyme GlgB.